The chain runs to 299 residues: DNA-binding transcriptional repressor CapW (299 aa).

Residues 1–22 (MTDESKPTDDQPTSKGRQGARW) form a disordered region. The interval 1–95 (MTDESKPTDD…SFKAVFPSSA (95 aa)) is winged HTH domain. The interval 96-207 (VERYLDDLLR…LTRIKCCKYV (112 aa)) is WYL domain. A WYL domain is found at 131 to 211 (GRRLNADIVG…KCCKYVGQDR (81 aa)). The tract at residues 156–200 (YQSLTDPEGGERMLSPHALVHDGNRWHVRAYCHKRKAFRDFSLTR) is probable ligand-binding region. Residues 208-299 (GQDRDRADED…RDEIKDLIQY (92 aa)) form a WCX domain region.

As to quaternary structure, homodimer.

In terms of biological role, transcriptional regulator of a CBASS antivirus system. CBASS (cyclic oligonucleotide-based antiphage signaling system) provides immunity against bacteriophage. The CD-NTase protein synthesizes cyclic nucleotides in response to infection; these serve as specific second messenger signals. The signals activate a diverse range of effectors, leading to bacterial cell death and thus abortive phage infection. A type III CBASS system, part of a Cap17-CapW-CdnC-Cap7-Cap6-Cap18 locus. Binds specifically to palindromes that overlap the -10 site in the promoter of cdnC, found between the genes for divergently transcribed capW and cdnC (cognate DNA). Probably represses transcription bidirectionally from the promoter. The polypeptide is DNA-binding transcriptional repressor CapW (Pseudomonas aeruginosa).